Here is a 108-residue protein sequence, read N- to C-terminus: MNISSLRKAFIFMGAVAALSLVNAQSALAANESAKDMTCQEFIDLNPKAMTPVAWWMLHEETVYKGGDTVTLNETDLTQIPKVIEYCKKNPQKNLYTFKNQASNDLPN.

An N-terminal signal peptide occupies residues 1 to 29; sequence MNISSLRKAFIFMGAVAALSLVNAQSALA. Lys93 is subject to N6-acetyllysine.

It belongs to the HdeB family.

Its subcellular location is the periplasm. In terms of biological role, required for optimal acid stress protection, which is important for survival of enteric bacteria in the acidic environment of the host stomach. Exhibits a chaperone-like activity at acidic pH by preventing the aggregation of many different periplasmic proteins. The polypeptide is Acid stress chaperone HdeB (Escherichia coli O6:H1 (strain CFT073 / ATCC 700928 / UPEC)).